The primary structure comprises 480 residues: Gasdermin-C4 (480 aa).

Residues 1-226 form a triggers pyroptosis region; sequence MGYSFDRASK…TCVILPSATK (226 aa).

This sequence belongs to the gasdermin family. Homooligomer; homooligomeric ring-shaped pore complex containing 27-28 subunits when inserted in the membrane. In terms of processing, cleavage by CASP8 relieves autoinhibition by releasing the N-terminal moiety (Gasdermin-C4, N-terminal) that initiates pyroptosis. Post-translationally, palmitoylated.

The protein resides in the cytoplasm. The protein localises to the cytosol. It localises to the cell membrane. With respect to regulation, the full-length protein before cleavage is inactive: intramolecular interactions between N- and C-terminal domains mediate autoinhibition in the absence of activation signal. The intrinsic pyroptosis-inducing activity is carried by the released N-terminal moiety (Gasdermin-C4, N-terminal) following cleavage by caspase CASP8. This form constitutes the precursor of the pore-forming protein: upon cleavage, the released N-terminal moiety (Gasdermin-C4, N-terminal) binds to membranes and forms pores, triggering pyroptosis. Functionally, pore-forming protein that causes membrane permeabilization and pyroptosis. Produced by the cleavage of gasdermin-C4 by caspase CASP8 in response to death signals. After cleavage, moves to the plasma membrane where it strongly binds to membrane inner leaflet lipids. Homooligomerizes within the membrane and forms pores of 10-15 nanometers (nm) of inner diameter, triggering pyroptosis. This chain is Gasdermin-C4, found in Mus musculus (Mouse).